The sequence spans 178 residues: Probable chorismate pyruvate-lyase (178 aa).

4 residues coordinate substrate: methionine 37, arginine 78, leucine 114, and glutamate 165.

Belongs to the UbiC family.

Its subcellular location is the cytoplasm. The catalysed reaction is chorismate = 4-hydroxybenzoate + pyruvate. The protein operates within cofactor biosynthesis; ubiquinone biosynthesis. Its function is as follows. Removes the pyruvyl group from chorismate, with concomitant aromatization of the ring, to provide 4-hydroxybenzoate (4HB) for the ubiquinone pathway. The sequence is that of Probable chorismate pyruvate-lyase from Aeromonas hydrophila subsp. hydrophila (strain ATCC 7966 / DSM 30187 / BCRC 13018 / CCUG 14551 / JCM 1027 / KCTC 2358 / NCIMB 9240 / NCTC 8049).